A 2275-amino-acid chain; its full sequence is Multifunctional protein pyrABCN (2275 aa).

Positions 1–440 (MPETVGHEEP…PGPRDTEYLF (440 aa)) are GATase (Glutamine amidotransferase). L-glutamine-binding residues include Ser-102, Gly-313, and Gly-315. In terms of domain architecture, Glutamine amidotransferase type-1 spans 265–453 (RVLCLDVGLK…INAIKDTIAS (189 aa)). Cys-342 (nucleophile; for GATase activity) is an active-site residue. The L-glutamine site is built by Leu-343, Gln-346, Asn-384, Gly-386, and Tyr-387. Catalysis depends on for GATase activity residues His-426 and Glu-428. Positions 441-482 (DVFINAIKDTIASPEALQKPVNFPGGAVAENIKASPRVSVKK) are linker. The interval 483–1522 (VLILGSGGLS…TNVKNAKILI (1040 aa)) is CPSase (Carbamoyl-phosphate synthase). Residues Arg-600, Arg-640, Gly-646, Gly-647, Arg-677, Met-679, Glu-684, Gly-710, Ile-711, His-712, Gln-753, and Glu-767 each coordinate ATP. ATP-grasp domains lie at 604–796 (ARSM…KLGL) and 1139–1330 (SRML…KAMI). Residues Gln-753, Glu-767, and Asn-769 each coordinate Mg(2+). Mn(2+) contacts are provided by Gln-753, Glu-767, and Asn-769. ATP-binding residues include Arg-1175, Lys-1214, Ile-1216, Glu-1221, Gly-1246, Val-1247, His-1248, Ser-1249, Gln-1289, and Glu-1301. Mg(2+) is bound by residues Gln-1289, Glu-1301, and Asn-1303. Residues Gln-1289, Glu-1301, and Asn-1303 each contribute to the Mn(2+) site. The 180-residue stretch at 1396–1575 (FKLPKRNILL…KDFEAVTKAS (180 aa)) folds into the MGS-like domain. Residues 1523–1532 (EAIARHYALN) are linker. A defective DHOase domain region spans residues 1533 to 1862 (VQTIDYQTSH…FQGKTSCLDS (330 aa)). The disordered stretch occupies residues 1863–1882 (EITPDAPKGSDMSGHRIVPA). Residues 1863–1953 (EITPDAPKGS…LQMLSRSPFK (91 aa)) form a linker region. The interval 1954 to 2258 (QKHVLSVNQF…EFDMLMWMQM (305 aa)) is ATCase (Aspartate transcarbamylase). Residues Arg-2006 and Thr-2007 each coordinate carbamoyl phosphate. Lys-2034 lines the L-aspartate pocket. 3 residues coordinate carbamoyl phosphate: Arg-2055, His-2083, and Gln-2086. L-aspartate is bound by residues Arg-2116 and Arg-2178. Leu-2217 and Pro-2218 together coordinate carbamoyl phosphate.

It in the central section; belongs to the metallo-dependent hydrolases superfamily. DHOase family. CAD subfamily. The protein in the N-terminal section; belongs to the CarA family. This sequence in the 2nd section; belongs to the CarB family. In the 3rd section; belongs to the metallo-dependent hydrolases superfamily. DHOase family. CAD subfamily. It in the C-terminal section; belongs to the aspartate/ornithine carbamoyltransferase superfamily. ATCase family. Mg(2+) serves as cofactor. Mn(2+) is required as a cofactor.

It carries out the reaction hydrogencarbonate + L-glutamine + 2 ATP + H2O = carbamoyl phosphate + L-glutamate + 2 ADP + phosphate + 2 H(+). The enzyme catalyses L-glutamine + H2O = L-glutamate + NH4(+). The catalysed reaction is hydrogencarbonate + NH4(+) + 2 ATP = carbamoyl phosphate + 2 ADP + phosphate + 2 H(+). It catalyses the reaction carbamoyl phosphate + L-aspartate = N-carbamoyl-L-aspartate + phosphate + H(+). It functions in the pathway pyrimidine metabolism; UMP biosynthesis via de novo pathway; (S)-dihydroorotate from bicarbonate: step 1/3. It participates in pyrimidine metabolism; UMP biosynthesis via de novo pathway; (S)-dihydroorotate from bicarbonate: step 2/3. Multifunctional protein that encodes the first 2 enzymatic activities of the de novo pyrimidine pathway: carbamoylphosphate synthetase (CPSase; EC 6.3.5.5) and aspartate transcarbamylase (ATCase; EC 2.1.3.2). The CPSase-function is accomplished in 2 steps, by a glutamine-dependent amidotransferase activity (GATase) that binds and cleaves glutamine to produce ammonia, followed by an ammonium-dependent carbamoyl phosphate synthetase, which reacts with the ammonia, hydrogencarbonate and ATP to form carbamoyl phosphate. The endogenously produced carbamoyl phosphate is sequestered and channeled to the ATCase active site. ATCase then catalyzes the formation of carbamoyl-L-aspartate from L-aspartate and carbamoyl phosphate. The protein is Multifunctional protein pyrABCN of Emericella nidulans (strain FGSC A4 / ATCC 38163 / CBS 112.46 / NRRL 194 / M139) (Aspergillus nidulans).